The chain runs to 1194 residues: Multidrug efflux ATP-binding/permease protein Rv0194 (1194 aa).

The next 6 helical transmembrane spans lie at 20 to 40 (LLLGFGAALAGTVIAVLVPLV), 56 to 76 (LAPWAVVLVAAAGATYLLMYV), 130 to 150 (LLFDVPNVLRHVLTLLLGVAV), 153 to 173 (WLSVPLALLAVLLVPVIGLIA), 258 to 278 (FALGGWMAAQGSITVGTFVAF), and 279 to 299 (WACLTLLARPACDLAGMLTIA). Residues 21-301 (LLGFGAALAG…LAGMLTIAQQ (281 aa)) enclose the ABC transmembrane type-1 1 domain. In terms of domain architecture, ABC transporter 1 spans 334–568 (LEFQRVSFGY…CPRYRELLSP (235 aa)). 367-374 (GAPGSGKS) contacts ATP. Helical transmembrane passes span 628–648 (ALSLLLVAVQTCAGLLPPLLI), 660–680 (VLSALWWAALAGTATVVIRWV), 743–763 (LVVAVISVVTLVGILVALLAI), 765–785 (ARLVLLIFTTMPVLALATWQF), 847–867 (LLALYYPFVALLCSLATTLVL), and 878–898 (VISVGALVTYLLYIELLYTPI). The ABC transmembrane type-1 2 domain occupies 628 to 910 (ALSLLLVAVQ…LAQMFDDYQR (283 aa)). Residues 942–1177 (VVFDAVHYSY…GGHYSRLWAA (236 aa)) form the ABC transporter 2 domain. 976-983 (GSTGSGKS) serves as a coordination point for ATP.

It belongs to the ABC transporter superfamily. Lipid exporter (TC 3.A.1.106) family.

It localises to the cell inner membrane. Efflux is inhibited by reserpine. Overexpression in M.smegmatis increases resistance to erythromycin, ampicillin, novobiocin and vancomycin. It also reduces accumulation of ethidium bromide in the cell. The sequence is that of Multidrug efflux ATP-binding/permease protein Rv0194 from Mycobacterium tuberculosis (strain ATCC 25618 / H37Rv).